Consider the following 146-residue polypeptide: Transcription antitermination protein NusB (146 aa).

The protein belongs to the NusB family.

In terms of biological role, involved in transcription antitermination. Required for transcription of ribosomal RNA (rRNA) genes. Binds specifically to the boxA antiterminator sequence of the ribosomal RNA (rrn) operons. The polypeptide is Transcription antitermination protein NusB (Solibacter usitatus (strain Ellin6076)).